Consider the following 314-residue polypeptide: MEGKTSRYQDEAHDSAGSFNEETEGLMSGLHRSTKKRKLSSIVKLATPFLIVSFILNIVQLAYITVRRPECYSLYAKLKEHEITVPFRYATEYSDDEHTHEEKDALWNAIDISEGFVAISNDESDRLGLPRSKTFPWDANKGIYVSHGHHALHCTVLLHAYTYDAHQGKKPLVSYHHIEHCLDLLRQDIMCYANDVMDYTPDHGDNFLTGEGQQRKCRDWNKLSAWVKERSACYKTINITRAGEDHGVAHQLDRYTYCPPGSPYEPLIKAFKDLGRVNTGNLAADGFHELTPEELAAEAQAVAEHNKQILADEG.

Residues 1–14 (MEGKTSRYQDEAHD) are compositionally biased toward basic and acidic residues. Residues 1 to 24 (MEGKTSRYQDEAHDSAGSFNEETE) form a disordered region. 2 short sequence motifs (HXXHC) span residues 150–154 (HALHC) and 177–181 (HIEHC).

This sequence belongs to the ustYa family.

Its pathway is mycotoxin biosynthesis. In terms of biological role, chlorinase; part of the gene cluster that mediates the biosynthesis of the mycotoxin cyclochlorotine, a hepatotoxic and carcinogenic cyclic chlorinated pentapeptide. Within the pathway, cctP2 catalyzes the formation of isocyclochlorotine via dichlorination of the Pro from the isocyclotine skeleton. The NRPS cctN initially catalyzes the condensation of L-serine (Ser), Pro, L-2-aminobutyrate (2Abu), Ser, and beta-Phe in this order to produce isocyclotine. After the dichlorination of Pro2 catalyzed by cctP2 to produce isocyclochlorotine, the cctO-mediated transacylation of isocyclochlorotine can furnish cyclochlorotine. The subsequent hydroxylation of cyclochlorotine by cctR yields hydroxycyclochlorotine as the final product. CctP1 probably acts as a phenylalanine aminomutase and provides the uncommon building block beta-Phe. Furthermore, 2Abu can be synthesized from threonine by one of the threonine dehydratases and transaminases localized outside of the cluster. The functions of the remaining proteins encoded by the cluster, cctM and cctT, have not been identified yet. The polypeptide is Chlorinase cctP2 (Talaromyces islandicus (Penicillium islandicum)).